The following is a 91-amino-acid chain: Small ribosomal subunit protein uS19 (91 aa).

The protein belongs to the universal ribosomal protein uS19 family.

Protein S19 forms a complex with S13 that binds strongly to the 16S ribosomal RNA. In Prochlorococcus marinus (strain SARG / CCMP1375 / SS120), this protein is Small ribosomal subunit protein uS19.